The primary structure comprises 362 residues: Protein mom-2 (362 aa).

An N-terminal signal peptide occupies residues 1–24 (MHINTPVLLAIIYFLVFAPKSADA). Disulfide bonds link C80–C91, C129–C137, C139–C167, C217–C231, and C219–C226. N90 is a glycosylation site (N-linked (GlcNAc...) asparagine). S223 carries O-palmitoleoyl serine; by mom-1 lipidation. Positions 263 to 282 (TVRSSPSAGSSGRSERFARN) are disordered. The segment covering 265 to 274 (RSSPSAGSSG) has biased composition (low complexity). 6 disulfide bridges follow: C304–C322, C313–C317, C321–C361, C337–C352, C339–C349, and C344–C345.

It belongs to the Wnt family. Post-translationally, palmitoleoylation is required for efficient binding to frizzled receptors. Depalmitoleoylation leads to Wnt signaling pathway inhibition. As to expression, expressed by anchor cell and vulva precursor cell descendants P5.ppa, P5.ppp, P7.paa and P7.pap. Expressed in the tail and weakly expressed in the vulva and body wall muscles.

The protein resides in the secreted. Its subcellular location is the extracellular space. It is found in the extracellular matrix. In terms of biological role, ligand for members of the frizzled family of seven transmembrane receptors. Required in embryonic development for endoderm specification and the correct positioning and orientation of the mitotic spindles and division planes in blastomere cells. Involved in cleavage axis determination. Binds to receptor tyrosine kinase cam-1. Together with wnt ligand lin-44, plays a role in controlling vulva precursor cell P7.p lineage orientation during vulva development, probably by acting as a ligand for tyrosine kinase receptor lin-18. May act redundantly with other Wnt ligands such as cwn-1 and cwn-2 to control seam cell polarity. This chain is Protein mom-2 (mom-2), found in Caenorhabditis elegans.